We begin with the raw amino-acid sequence, 381 residues long: Probable glucuronosyltransferase Os04g0103100 (381 aa).

Topologically, residues 1–69 are cytoplasmic; that stretch reads MASIRRPHSP…HTSFRRPLPR (69 aa). The tract at residues 21–50 is disordered; sequence HLGPFASSSPPSSPLRHSSSSSSPRSAAHH. The segment covering 26–46 has biased composition (low complexity); sequence ASSSPPSSPLRHSSSSSSPRS. The helical; Signal-anchor for type II membrane protein transmembrane segment at 70 to 90 threads the bilayer; sequence FAAFFLLGSFLGLLHFLSHLP. Residues 91–381 lie on the Lumenal side of the membrane; that stretch reads RPLGPIPNPN…TDLDVIIPLK (291 aa). The disordered stretch occupies residues 96-122; the sequence is IPNPNSHHRHRDPFPILQHPHPPSTPH. Asparagine 194 and asparagine 296 each carry an N-linked (GlcNAc...) asparagine glycan.

It belongs to the glycosyltransferase 43 family.

The protein resides in the golgi apparatus membrane. Its function is as follows. Involved in the synthesis of glucuronoxylan hemicellulose in secondary cell walls. The polypeptide is Probable glucuronosyltransferase Os04g0103100 (Oryza sativa subsp. japonica (Rice)).